A 241-amino-acid polypeptide reads, in one-letter code: Terpene cyclase olcD (241 aa).

7 helical membrane passes run 19 to 39 (LSDI…FATI), 49 to 71 (WMPL…LYPP), 76 to 95 (ILGF…LRFA), 108 to 128 (YLPV…LALI), 137 to 157 (FYYG…SGLV), 166 to 186 (SYTI…GLFF), and 202 to 222 (LMRW…VQFW).

It belongs to the paxB family.

The protein localises to the membrane. It functions in the pathway secondary metabolite biosynthesis; terpenoid biosynthesis. In terms of biological role, terpene cyclase; part of the gene cluster that mediates the biosynthesis of 15-deoxyoxalicine B. The first step of the pathway is the synthesis of nicotinyl-CoA from nicotinic acid by the nicotinic acid-CoA ligase olcI. Nicotinyl-CoA is then a substrate of polyketide synthase olcA to produce 4-hydroxy-6-(3-pyridinyl)-2H-pyran-2-one (HPPO) which is further prenylated by the polyprenyl transferase olcH to yield geranylgeranyl-HPPO. Geranylgeranyl pyrophosphate is provided by the cluster-specific geranylgeranyl pyrophosphate synthase olcC. The FAD-dependent monooxygenase olcE catalyzes the epoxidation of geranylgeranyl-HPPO and the terpene cyclase olcD catalyzes the cyclization of the terpenoid component, resulting in the formation of the tricyclic terpene moiety seen in predecaturin E. The cytochrome P450 monooxygenase then catalyzes the allylic oxidation of predecaturin E, which is followed by spirocylization with concomitant loss of one molecule of water to form decaturin E. Decaturin E is the substrate of the cytochrome P450 monooxygenase olcJ which hydroxylates it at the C-29 position to form decaturin F. The short-chain dehydrogenase/reductase olcF may catalyze the oxidation of decaturin F to generate the 29-hydroxyl-27-one intermediate, and subsequent hemiacetal formation probably leads to the formation of decaturin C. The dioxygenase olcK may be a peroxisomal enzyme that catalyzes the hydroxylation of decaturin C into decaturin A once decaturin C is shuttled into the peroxisome by the MFS transporter olcL. Finally the cytochrome P450 monooxygenase olcB catalyzes the oxidative rearrangement to yield 15-deoxyoxalicine B. In the absence of olcJ, decaturin E may be shunted to a pathway in which it is oxidized to a ketone, possibly by olcF, to form decaturin D, which undergoes further allylic oxidation to yield decaturin G. Moreover, in the absence of oclK or oclL, oclB can convert decaturin C into 15-deoxyoxalicine A. This chain is Terpene cyclase olcD, found in Penicillium canescens.